The primary structure comprises 74 residues: Toxin Td6 (74 aa).

The first 8 residues, Ile-1–Glu-8, serve as a signal peptide directing secretion. In terms of domain architecture, LCN-type CS-alpha/beta spans Lys-9–Gly-71. 4 cysteine pairs are disulfide-bonded: Cys-19–Cys-70, Cys-23–Cys-45, Cys-31–Cys-51, and Cys-35–Cys-53. Arg-72 bears the Arginine amide mark.

This sequence belongs to the long (4 C-C) scorpion toxin superfamily. Sodium channel inhibitor family. Beta subfamily. Expressed by the venom gland.

The protein resides in the secreted. Beta toxins bind voltage-independently at site-4 of sodium channels (Nav) and shift the voltage of activation toward more negative potentials thereby affecting sodium channel activation and promoting spontaneous and repetitive firing. The chain is Toxin Td6 from Tityus discrepans (Venezuelan scorpion).